A 309-amino-acid chain; its full sequence is UDP-N-acetylenolpyruvoylglucosamine reductase (309 aa).

Residues 33 to 198 form the FAD-binding PCMH-type domain; the sequence is RVGGPAQVLF…TSARFRGTPA (166 aa). Arg178 is an active-site residue. Ser227 serves as the catalytic Proton donor. Glu297 is a catalytic residue.

Belongs to the MurB family. FAD is required as a cofactor.

The protein resides in the cytoplasm. The enzyme catalyses UDP-N-acetyl-alpha-D-muramate + NADP(+) = UDP-N-acetyl-3-O-(1-carboxyvinyl)-alpha-D-glucosamine + NADPH + H(+). Its pathway is cell wall biogenesis; peptidoglycan biosynthesis. Functionally, cell wall formation. This chain is UDP-N-acetylenolpyruvoylglucosamine reductase, found in Rhodopseudomonas palustris (strain HaA2).